The following is a 278-amino-acid chain: Urease accessory protein UreD (278 aa).

It belongs to the UreD family. As to quaternary structure, ureD, UreF and UreG form a complex that acts as a GTP-hydrolysis-dependent molecular chaperone, activating the urease apoprotein by helping to assemble the nickel containing metallocenter of UreC. The UreE protein probably delivers the nickel.

The protein localises to the cytoplasm. Functionally, required for maturation of urease via the functional incorporation of the urease nickel metallocenter. The sequence is that of Urease accessory protein UreD from Pseudomonas putida (strain ATCC 700007 / DSM 6899 / JCM 31910 / BCRC 17059 / LMG 24140 / F1).